A 153-amino-acid chain; its full sequence is Aspartate carbamoyltransferase regulatory chain (153 aa).

Positions 109, 114, 138, and 141 each coordinate Zn(2+).

Belongs to the PyrI family. As to quaternary structure, contains catalytic and regulatory chains. The cofactor is Zn(2+).

Its function is as follows. Involved in allosteric regulation of aspartate carbamoyltransferase. The chain is Aspartate carbamoyltransferase regulatory chain from Wigglesworthia glossinidia brevipalpis.